A 243-amino-acid chain; its full sequence is uncharacterized protein (243 aa).

Residues 1-19 form the signal peptide; that stretch reads MDELALSFSLTCLLPENRA. The N-linked (GlcNAc...) asparagine glycan is linked to Asn136.

The protein localises to the secreted. This is an uncharacterized protein from Homo sapiens (Human).